Reading from the N-terminus, the 352-residue chain is Photosystem II D2 protein (352 aa).

T2 carries the N-acetylthreonine modification. Position 2 is a phosphothreonine (T2). Residues 40-60 form a helical membrane-spanning segment; the sequence is CAYMALGGWLTGTTFVTSWYT. H117 provides a ligand contact to chlorophyll a. The chain crosses the membrane as a helical span at residues 124–140; that stretch reads GFMLRQFEIAQSLKLRP. Positions 129 and 142 each coordinate pheophytin a. The chain crosses the membrane as a helical span at residues 152-165; it reads VFVSVFLIYPLGQA. H197 is a binding site for chlorophyll a. A helical membrane pass occupies residues 207–227; it reads AALLCAIHGATVENTLFEDGD. Residues H214 and F261 each contribute to the a plastoquinone site. A Fe cation-binding site is contributed by H214. H268 serves as a coordination point for Fe cation. A helical transmembrane segment spans residues 278–294; the sequence is GLWMSAIGVVGLALNLR.

This sequence belongs to the reaction center PufL/M/PsbA/D family. As to quaternary structure, PSII is composed of 1 copy each of membrane proteins PsbA, PsbB, PsbC, PsbD, PsbE, PsbF, PsbH, PsbI, PsbJ, PsbK, PsbL, PsbM, PsbT, PsbX, PsbY, PsbZ, Psb30/Ycf12, at least 3 peripheral proteins of the oxygen-evolving complex and a large number of cofactors. It forms dimeric complexes. The D1/D2 heterodimer binds P680, chlorophylls that are the primary electron donor of PSII, and subsequent electron acceptors. It shares a non-heme iron and each subunit binds pheophytin, quinone, additional chlorophylls, carotenoids and lipids. There is also a Cl(-1) ion associated with D1 and D2, which is required for oxygen evolution. The PSII complex binds additional chlorophylls, carotenoids and specific lipids. is required as a cofactor.

It localises to the plastid. Its subcellular location is the chloroplast thylakoid membrane. The enzyme catalyses 2 a plastoquinone + 4 hnu + 2 H2O = 2 a plastoquinol + O2. Photosystem II (PSII) is a light-driven water:plastoquinone oxidoreductase that uses light energy to abstract electrons from H(2)O, generating O(2) and a proton gradient subsequently used for ATP formation. It consists of a core antenna complex that captures photons, and an electron transfer chain that converts photonic excitation into a charge separation. The D1/D2 (PsbA/PsbD) reaction center heterodimer binds P680, the primary electron donor of PSII as well as several subsequent electron acceptors. D2 is needed for assembly of a stable PSII complex. The sequence is that of Photosystem II D2 protein from Stigeoclonium helveticum (Green alga).